We begin with the raw amino-acid sequence, 73 residues long: MILRVKVKPNAKTVSVEQLEDKSLKISIKSPPVNGKANEELIKVLSEFLKVSKSKINIKAGKSSREKLVEIYD.

The protein belongs to the UPF0235 family.

The protein is UPF0235 protein HY04AAS1_1378 of Hydrogenobaculum sp. (strain Y04AAS1).